Consider the following 123-residue polypeptide: Putative outer membrane protein CPn_0818/CP_1053/CPj0818/CpB0847 (123 aa).

The first 30 residues, 1-30, serve as a signal peptide directing secretion; the sequence is MKRQKRKQSITLIEMMVVITLIGIIGGALA.

It is found in the cell outer membrane. This Chlamydia pneumoniae (Chlamydophila pneumoniae) protein is Putative outer membrane protein CPn_0818/CP_1053/CPj0818/CpB0847.